The primary structure comprises 216 residues: Ras-related protein Rab-5C (216 aa).

Residues S30, A31, G33, K34, S35, S36, H47, E48, T53, and G79 each coordinate GTP. S35 provides a ligand contact to Mg(2+). 2 consecutive short sequence motifs (switch) follow at residues 45–57 and 78–94; these read QFHEYQESTIGAA and AGQERYHSLAPMYYRGA. T53 serves as a coordination point for Mg(2+). At S85 the chain carries Phosphoserine. GTP-binding residues include N134, K135, D137, A165, and K166. Residues 185–216 are disordered; that stretch reads NEPQNAAGAPGRTRGVDLQESNPASRSQCCSN. Residues 203–216 show a composition bias toward polar residues; sequence QESNPASRSQCCSN. S-geranylgeranyl cysteine attachment occurs at residues C213 and C214.

The protein belongs to the small GTPase superfamily. Rab family. Interacts with EEA1 and INCA1. Interacts with GDI1, GDI2, CHML and CHM; phosphorylation at Ser-85 disrupts this interaction. Requires Mg(2+) as cofactor. In terms of processing, phosphorylation of Ser-85 in the switch II region by LRRK2 prevents the association of RAB regulatory proteins, including CHM, CHML and RAB GDP dissociation inhibitors GDI1 and GDI2.

Its subcellular location is the cell membrane. It is found in the early endosome membrane. The protein localises to the melanosome. It carries out the reaction GTP + H2O = GDP + phosphate + H(+). Regulated by guanine nucleotide exchange factors (GEFs) which promote the exchange of bound GDP for free GTP. Regulated by GTPase activating proteins (GAPs) which increase the GTP hydrolysis activity. Inhibited by GDP dissociation inhibitors (GDIs). The small GTPases Rab are key regulators of intracellular membrane trafficking, from the formation of transport vesicles to their fusion with membranes. Rabs cycle between an inactive GDP-bound form and an active GTP-bound form that is able to recruit to membranes different sets of downstream effectors directly responsible for vesicle formation, movement, tethering and fusion. In Mus musculus (Mouse), this protein is Ras-related protein Rab-5C.